The following is a 287-amino-acid chain: Acetylglutamate kinase (287 aa).

Substrate is bound by residues 70-71, Arg-92, and Asn-184; that span reads GG.

This sequence belongs to the acetylglutamate kinase family. ArgB subfamily.

It is found in the cytoplasm. The enzyme catalyses N-acetyl-L-glutamate + ATP = N-acetyl-L-glutamyl 5-phosphate + ADP. Its pathway is amino-acid biosynthesis; L-arginine biosynthesis; N(2)-acetyl-L-ornithine from L-glutamate: step 2/4. In terms of biological role, catalyzes the ATP-dependent phosphorylation of N-acetyl-L-glutamate. This Dinoroseobacter shibae (strain DSM 16493 / NCIMB 14021 / DFL 12) protein is Acetylglutamate kinase.